Here is a 427-residue protein sequence, read N- to C-terminus: Glutamate-1-semialdehyde 2,1-aminomutase (427 aa).

The residue at position 265 (Lys-265) is an N6-(pyridoxal phosphate)lysine.

Belongs to the class-III pyridoxal-phosphate-dependent aminotransferase family. HemL subfamily. As to quaternary structure, homodimer. Pyridoxal 5'-phosphate is required as a cofactor.

Its subcellular location is the cytoplasm. It catalyses the reaction (S)-4-amino-5-oxopentanoate = 5-aminolevulinate. The protein operates within porphyrin-containing compound metabolism; protoporphyrin-IX biosynthesis; 5-aminolevulinate from L-glutamyl-tRNA(Glu): step 2/2. The polypeptide is Glutamate-1-semialdehyde 2,1-aminomutase (Burkholderia thailandensis (strain ATCC 700388 / DSM 13276 / CCUG 48851 / CIP 106301 / E264)).